The primary structure comprises 364 residues: DNA replication and repair protein RecF (364 aa).

30-37 contributes to the ATP binding site; it reads GNNGMGKT.

This sequence belongs to the RecF family.

The protein localises to the cytoplasm. The RecF protein is involved in DNA metabolism; it is required for DNA replication and normal SOS inducibility. RecF binds preferentially to single-stranded, linear DNA. It also seems to bind ATP. This Porphyromonas gingivalis (strain ATCC BAA-308 / W83) protein is DNA replication and repair protein RecF.